The following is a 1247-amino-acid chain: Structural polyprotein (1247 aa).

The tract at residues 52-103 (ALRTVPQKPRRTRKTKKQKQVKQEQQSTRNQKKKAPKQKQTQKKKRPGRRER) is disordered. Basic residues-rich tracts occupy residues 59–71 (KPRR…KQKQ) and 81–100 (NQKK…RPGR). The ribosome-binding stretch occupies residues 86–99 (APKQKQTQKKKRPG). The cysteines at positions 112 and 127 are disulfide-linked. A Peptidase S3 domain is found at 112–260 (CIFEVKHEGK…KITPEGSVEW (149 aa)). Residue histidine 138 is the Charge relay system of the active site. Positions 154 to 159 (KRSSKY) are interaction with spike glycoprotein E2. Catalysis depends on charge relay system residues aspartate 160 and serine 212. The segment at 261–273 (SLALPVMCLLANT) is functions as an uncleaved signal peptide for the precursor of protein E3/E2. Intrachain disulfides connect cysteine 268-cysteine 277, cysteine 282-cysteine 286, cysteine 285-cysteine 317, cysteine 343-cysteine 449, cysteine 346-cysteine 352, cysteine 415-cysteine 429, cysteine 477-cysteine 590, cysteine 525-cysteine 549, and cysteine 527-cysteine 544. A glycan (N-linked (GlcNAc...) asparagine; by host) is linked at asparagine 272. The Extracellular segment spans residues 325–691 (NARENFNVYK…YYYELYPTTT (367 aa)). N-linked (GlcNAc...) asparagine; by host glycosylation is present at asparagine 587. A helical membrane pass occupies residues 692–712 (IAVLAAASIVVASLVSLSLGM). Residues 713 to 747 (CICARRRCITPYELTPGATIPFLLGVLCCVKTAKA) lie on the Cytoplasmic side of the membrane. An interaction with the capsid protein region spans residues 715–719 (CARRR). Residues cysteine 720, cysteine 740, and cysteine 741 are each lipidated (S-palmitoyl cysteine; by host). Residues 720-740 (CITPYELTPGATIPFLLGVLC) form a transient transmembrane before p62-6K protein processing region. Residues cysteine 720 and cysteine 741 are joined by a disulfide bond. The Extracellular segment spans residues 748–762 (ASYYEAATYLWNEQQ). The helical transmembrane segment at 763–783 (PLFWLQLLIPLSAAIVACNCL) threads the bilayer. The Cytoplasmic segment spans residues 784–787 (KLLP). A helical membrane pass occupies residues 788–808 (CCCKTLTFLAVMSIGARTVSA). Residues 809–1223 (YEHATVIPNT…AMSWVQKITG (415 aa)) lie on the Extracellular side of the membrane. Cystine bridges form between cysteine 857–cysteine 922, cysteine 870–cysteine 902, cysteine 871–cysteine 904, and cysteine 876–cysteine 886. Residues 892-909 (VYPFMWGGAYCFCDAENT) are E1 fusion peptide loop. 2 N-linked (GlcNAc...) asparagine; by host glycosylation sites follow: asparagine 949 and asparagine 1078. 4 disulfide bridges follow: cysteine 1067/cysteine 1079, cysteine 1109/cysteine 1184, cysteine 1114/cysteine 1188, and cysteine 1136/cysteine 1178. The chain crosses the membrane as a helical span at residues 1224-1244 (GVGLVVAIAALILIIVLCVSF). A lipid anchor (S-palmitoyl cysteine; by host) is attached at cysteine 1241. The Cytoplasmic portion of the chain corresponds to 1245–1247 (SRH).

In terms of assembly, homodimer. Homomultimer. Interacts with host karyopherin KPNA4; this interaction allows the nuclear import of the viral capsid protein. Interacts with spike glycoprotein E2. Interacts with host IRAK1; the interaction leads to inhibition of IRAK1-dependent signaling. The precursor of protein E3/E2 and E1 form a heterodimer shortly after synthesis. As to quaternary structure, the precursor of protein E3/E2 and E1 form a heterodimer shortly after synthesis. Processing of the precursor of protein E3/E2 into E2 and E3 results in a heterodimer of the spike glycoproteins E2 and E1. Spike at virion surface are constituted of three E2-E1 heterodimers. After target cell attachment and endocytosis, E1 change conformation to form homotrimers. Interacts with 6K protein. In terms of assembly, interacts with spike glycoprotein E1. Processing of the precursor of protein E3/E2 into E2 and E3 results in a heterodimer of the spike glycoproteins E2 and E1. Spike at virion surface are constituted of a trimer of E2-E1 heterodimers. Interacts with 6K protein. Interacts with host MXRA8; this interaction mediates virus entry. Oligomer. Interacts with spike glycoprotein E1. Interacts with spike glycoprotein E2. Post-translationally, structural polyprotein: Specific enzymatic cleavages in vivo yield mature proteins. Capsid protein is auto-cleaved during polyprotein translation, unmasking a signal peptide at the N-terminus of the precursor of E3/E2. The remaining polyprotein is then targeted to the host endoplasmic reticulum, where host signal peptidase cleaves it into pE2, 6K and E1 proteins. pE2 is further processed to mature E3 and E2 by host furin in trans-Golgi vesicle. Palmitoylated via thioester bonds. These palmitoylations may induce disruption of the C-terminus transmembrane. This would result in the reorientation of E2 C-terminus from lumenal to cytoplasmic side. In terms of processing, N-glycosylated. Post-translationally, palmitoylated via thioester bonds.

It is found in the virion. Its subcellular location is the host cytoplasm. It localises to the host cell membrane. The protein localises to the virion membrane. The protein resides in the host Golgi apparatus. It is found in the host trans-Golgi network. Its subcellular location is the host endoplasmic reticulum. It catalyses the reaction Autocatalytic release of the core protein from the N-terminus of the togavirus structural polyprotein by hydrolysis of a -Trp-|-Ser- bond.. Its function is as follows. Possesses a protease activity that results in its autocatalytic cleavage from the nascent structural protein. Following its self-cleavage, the capsid protein transiently associates with ribosomes, and within several minutes the protein binds to viral RNA and rapidly assembles into icosahedric core particles. The resulting nucleocapsid eventually associates with the cytoplasmic domain of the spike glycoprotein E2 at the cell membrane, leading to budding and formation of mature virions. In case of infection, new virions attach to target cells and after clathrin-mediated endocytosis their membrane fuses with the host endosomal membrane. This leads to the release of the nucleocapsid into the cytoplasm, followed by an uncoating event necessary for the genomic RNA to become accessible. The uncoating might be triggered by the interaction of capsid proteins with ribosomes. Binding of ribosomes would release the genomic RNA since the same region is genomic RNA-binding and ribosome-binding. Functionally, provides the signal sequence for the translocation of the precursor of protein E3/E2 to the host endoplasmic reticulum. Mediates pH protection of spike glycoprotein E1 during the transport via the secretory pathway. Plays a role in viral attachment to target host cell, by binding to the cell receptor MXRA8. Synthesized as a p62 precursor which is processed by furin at the cell membrane just before virion budding, giving rise to E2-E1 heterodimer. The p62-E1 heterodimer is stable, whereas E2-E1 is unstable and dissociate at low pH. p62 is processed at the last step, presumably to avoid E1 fusion activation before its final export to cell surface. E2 C-terminus contains a transitory transmembrane that would be disrupted by palmitoylation, resulting in reorientation of the C-terminal tail from lumenal to cytoplasmic side. This step is critical since E2 C-terminus is involved in budding by interacting with capsid proteins. This release of E2 C-terminus in cytoplasm occurs lately in protein export, and precludes premature assembly of particles at the endoplasmic reticulum membrane. In terms of biological role, acts as a viroporin that participates in virus glycoprotein processing and transport to the plasma membrane, cell permeabilization and budding of viral particles. Disrupts the calcium homeostasis of the cell, probably at the endoplasmic reticulum level. This leads to cytoplasmic calcium elevation. Because of its lipophilic properties, the 6K protein is postulated to influence the selection of lipids that interact with the transmembrane domains of the glycoproteins, which, in turn, affects the deformability of the bilayer required for the extreme curvature that occurs as budding proceeds. Present in low amount in virions, about 3% compared to viral glycoproteins. Its function is as follows. Class II viral fusion protein. Fusion activity is inactive as long as E1 is bound to E2 in mature virion. After virus attachment to target cell via host MXRA8 and endocytosis, acidification of the endosome induce dissociation of E1/E2 heterodimer and concomitant trimerization of the E1 subunits. This E1 trimer is fusion active, and promotes release of viral nucleocapsid in cytoplasm after endosome and viral membrane fusion. Efficient fusion requires the presence of cholesterol and sphingolipid in the target membrane. The protein is Structural polyprotein of O'nyong-nyong virus (strain SG650) (ONNV).